The primary structure comprises 511 residues: Maturase K (511 aa).

This sequence belongs to the intron maturase 2 family. MatK subfamily.

Its subcellular location is the plastid. It localises to the chloroplast. Its function is as follows. Usually encoded in the trnK tRNA gene intron. Probably assists in splicing its own and other chloroplast group II introns. The polypeptide is Maturase K (Pistia stratiotes (Water lettuce)).